Consider the following 208-residue polypeptide: Outer-membrane lipoprotein carrier protein (208 aa).

Residues 1 to 22 (MLKPLSQLVCALPLVVAASSYA) form the signal peptide.

Belongs to the LolA family. Monomer.

Its subcellular location is the periplasm. In terms of biological role, participates in the translocation of lipoproteins from the inner membrane to the outer membrane. Only forms a complex with a lipoprotein if the residue after the N-terminal Cys is not an aspartate (The Asp acts as a targeting signal to indicate that the lipoprotein should stay in the inner membrane). In Shewanella loihica (strain ATCC BAA-1088 / PV-4), this protein is Outer-membrane lipoprotein carrier protein.